A 971-amino-acid polypeptide reads, in one-letter code: uncharacterized protein (971 aa).

A signal peptide spans 1-24; that stretch reads MQSNLLKVLGVLAIVATLVCFIFA. The segment at 127–146 is disordered; the sequence is RTRPGKSNLDDSNQMIPIPR. Helical transmembrane passes span 611–631, 721–741, 753–773, 795–815, 832–852, and 865–885; these read IKAI…LGFA, LGLS…IVII, AFMA…FLLF, VVMM…LDFV, FIGT…INWF, and GVNM…YGYV. Positions 933–944 are enriched in basic residues; that stretch reads TSRAKSRLKQRN. The tract at residues 933 to 971 is disordered; the sequence is TSRAKSRLKQRNRTLEHAEQNSKKYMKKIGENTNEGTLK. The span at 945-954 shows a compositional bias: basic and acidic residues; sequence RTLEHAEQNS.

It belongs to the TrbL/VirB6 family.

The protein localises to the cell membrane. This is an uncharacterized protein from Rickettsia typhi (strain ATCC VR-144 / Wilmington).